Consider the following 436-residue polypeptide: Voltage-gated potassium channel regulatory subunit KCNG3 (436 aa).

At 1–168 (MTFGRSGAAS…RTFEEPTSSL (168 aa)) the chain is on the cytoplasmic side. Residues 169 to 190 (AAQILASVSVVFVIVSMVVLCA) form a helical membrane-spanning segment. The Extracellular portion of the chain corresponds to 191-220 (STLPDWRNAAADNRSLDDRSRYSAGPGREP). The helical transmembrane segment at 221 to 242 (SGIIEAICIGWFTAECIVRFIV) threads the bilayer. The Cytoplasmic segment spans residues 243–253 (SKNKCEFVKRP). A helical membrane pass occupies residues 254-274 (LNIIDLLAITPYYISVLMTVF). Residues 275–284 (TGENSQLQRA) lie on the Extracellular side of the membrane. A helical; Voltage-sensor transmembrane segment spans residues 285 to 305 (GVTLRVLRMMRIFWVIKLARH). Residues 306-320 (FIGLQTLGLTLKRCY) are Cytoplasmic-facing. Residues 321–342 (REMVMLLVFICVAMAIFSALSQ) traverse the membrane as a helical segment. The Extracellular segment spans residues 343–360 (LLEHGLDLETSNKDFTSI). Residues 361-372 (PAACWWVIISMT) constitute an intramembrane region (helical). The Selectivity filter motif lies at 373 to 378 (TVGYGD). The stretch at 373 to 380 (TVGYGDMY) is an intramembrane region. Over 381-387 (PITVPGR) the chain is Extracellular. The chain crosses the membrane as a helical span at residues 388-416 (ILGGVCVVSGIVLLALPITFIYHSFVQCY). At 417 to 436 (HELKFRSARYSRSLSTEFLN) the chain is on the cytoplasmic side.

Belongs to the potassium channel family. G (TC 1.A.1.2) subfamily. Kv6.3/KCNG3 sub-subfamily. In terms of assembly, heterotetramer with KCNB1. Does not form homomultimers. Expressed in the brain, liver, testis, small intestine, colon, thymus and adrenal gland.

The protein resides in the cell membrane. The protein localises to the cytoplasm. In terms of biological role, regulatory subunit of the voltage-gated potassium (Kv) channel which, when coassembled with KCNB1, modulates the kinetics parameters of the heterotetrameric channel namely the inactivation and deactivation rate. Potassium channel subunit that does not form functional channels by itself. Reduces the deactivation rate. Moderately accelerates activation. In Homo sapiens (Human), this protein is Voltage-gated potassium channel regulatory subunit KCNG3.